Reading from the N-terminus, the 158-residue chain is Low molecular weight phosphotyrosine protein phosphatase (158 aa).

Position 2 is an N-acetylalanine (A2). The active-site Nucleophile is C13. R19 is a catalytic residue. D130 serves as the catalytic Proton donor. Phosphotyrosine occurs at positions 132 and 133.

Belongs to the low molecular weight phosphotyrosine protein phosphatase family.

It localises to the cytoplasm. It catalyses the reaction O-phospho-L-tyrosyl-[protein] + H2O = L-tyrosyl-[protein] + phosphate. The enzyme catalyses a phosphate monoester + H2O = an alcohol + phosphate. Acts on tyrosine phosphorylated proteins, low-MW aryl phosphates and natural and synthetic acyl phosphates. The protein is Low molecular weight phosphotyrosine protein phosphatase (ACP1) of Gallus gallus (Chicken).